The chain runs to 111 residues: Iron-sulfur cluster assembly protein CyaY (111 aa).

This sequence belongs to the frataxin family.

Functionally, involved in iron-sulfur (Fe-S) cluster assembly. May act as a regulator of Fe-S biogenesis. The chain is Iron-sulfur cluster assembly protein CyaY from Cupriavidus metallidurans (strain ATCC 43123 / DSM 2839 / NBRC 102507 / CH34) (Ralstonia metallidurans).